Reading from the N-terminus, the 593-residue chain is Methionine--tRNA ligase (593 aa).

Residues 7–17 (PYANGPRHIGH) carry the 'HIGH' region motif. Zn(2+) is bound by residues C139, C142, C152, and C155. Positions 343 to 347 (KFSTS) match the 'KMSKS' region motif. Residue T346 coordinates ATP.

Belongs to the class-I aminoacyl-tRNA synthetase family. MetG type 1 subfamily. Monomer. Zn(2+) is required as a cofactor.

The protein localises to the cytoplasm. The enzyme catalyses tRNA(Met) + L-methionine + ATP = L-methionyl-tRNA(Met) + AMP + diphosphate. Functionally, is required not only for elongation of protein synthesis but also for the initiation of all mRNA translation through initiator tRNA(fMet) aminoacylation. The chain is Methionine--tRNA ligase from Saccharopolyspora erythraea (strain ATCC 11635 / DSM 40517 / JCM 4748 / NBRC 13426 / NCIMB 8594 / NRRL 2338).